A 510-amino-acid polypeptide reads, in one-letter code: ATP synthase subunit alpha, mitochondrial (510 aa).

171–178 (GDRQTGKT) serves as a coordination point for ATP.

In terms of assembly, F-type ATP synthases have 2 components, the catalytic core F(1) and the membrane-embedded component F(0), linked together by a central stalk and a peripheral stalk. The central stalk, also called rotor shaft, is often seen as part of F(1). The peripheral stalk is seen as part of F(0). F(0) contains the membrane channel next to the rotor. F-type ATP synthases form dimers but each monomer functions independently in ATP generation. The dimer consists of 18 different polypeptides: ATP1 (subunit alpha, part of F(1), 3 molecules per monomer), ATP2 (subunit beta, part of F(1), 3 molecules per monomer), ATP3 (subunit gamma, part of the central stalk), ATP4 (subunit b, part of the peripheral stalk), ATP5/OSCP (subunit 5/OSCP, part of the peripheral stalk), ATP6 (subunit a, part of the peripheral stalk), ATP7 (subunit d, part of the peripheral stalk), ATP8 (subunit 8, part of the peripheral stalk), OLI1 (subunit c, part of the rotor, 10 molecules per monomer), ATP14 (subunit h, part of the peripheral stalk), ATP15 (subunit epsilon, part of the central stalk), ATP16 (subunit delta, part of the central stalk), ATP17 (subunit f, part of the peripheral stalk), ATP18 (subunit i/j, part of the peripheral stalk). Dimer-specific subunits are ATP19 (subunit k, at interface between monomers), ATP20 (subunit g, at interface between monomers), TIM11 (subunit e, at interface between monomers). Also contains subunit L.

Its subcellular location is the mitochondrion inner membrane. Mitochondrial membrane ATP synthase (F(1)F(0) ATP synthase or Complex V) produces ATP from ADP in the presence of a proton gradient across the membrane which is generated by electron transport complexes of the respiratory chain. F-type ATP synthases consist of two structural domains, F(1) - containing the extramembraneous catalytic core, and F(0) - containing the membrane proton channel, linked together by a central stalk and a peripheral stalk. During catalysis, ATP synthesis in the catalytic domain of F(1) is coupled via a rotary mechanism of the central stalk subunits to proton translocation. Subunits alpha/ATP1 and beta/ATP2 form the catalytic core in F(1). Rotation of the central stalk against the surrounding alpha/ATP1(3)beta/ATP2(3) subunits leads to hydrolysis of ATP in three separate catalytic sites on the beta/ATP2 subunits. Subunit alpha/ATP1 does not bear the catalytic high-affinity ATP-binding sites. The polypeptide is ATP synthase subunit alpha, mitochondrial (Pichia angusta (Yeast)).